The sequence spans 209 residues: Ribosomal RNA large subunit methyltransferase E (209 aa).

Gly63, Trp65, Asp83, Asp99, and Asp124 together coordinate S-adenosyl-L-methionine. Lys164 functions as the Proton acceptor in the catalytic mechanism.

This sequence belongs to the class I-like SAM-binding methyltransferase superfamily. RNA methyltransferase RlmE family.

It is found in the cytoplasm. It catalyses the reaction uridine(2552) in 23S rRNA + S-adenosyl-L-methionine = 2'-O-methyluridine(2552) in 23S rRNA + S-adenosyl-L-homocysteine + H(+). Specifically methylates the uridine in position 2552 of 23S rRNA at the 2'-O position of the ribose in the fully assembled 50S ribosomal subunit. The protein is Ribosomal RNA large subunit methyltransferase E of Vibrio atlanticus (strain LGP32) (Vibrio splendidus (strain Mel32)).